The sequence spans 62 residues: Large ribosomal subunit protein bL28 (62 aa).

It belongs to the bacterial ribosomal protein bL28 family.

This chain is Large ribosomal subunit protein bL28, found in Streptococcus thermophilus (strain CNRZ 1066).